The following is a 489-amino-acid chain: L-asparagine permease 1 (489 aa).

Helical transmembrane passes span 25 to 45 (QLQMIGIGGAIGTGLFLGAGG), 49 to 69 (KAGPGLFLVYGVCGVFVFLIL), 100 to 120 (AVGWMYFLHWAMTSIVDTTAI), 137 to 157 (ILALIALTVVLSMNLISVEWF), 162 to 182 (FWAALIKVLALMAFLVVGTVF), 210 to 230 (WLPLLIVTSGVVFAYSAVELV), 255 to 275 (IAIFYVGSVALLALLLPYTAY), 289 to 309 (IGFHGAGDLMNIVVLTAALSS), 344 to 364 (YGGIVLTAVITLFGVALNAFK), 369 to 389 (FEIVLNMSALGIIAGWATIVL), 413 to 433 (SPYSGYLTLLFLLVVLVTMAS), and 439 to 459 (TWTVATLIIVIPALTAGWYLV).

The protein belongs to the amino acid-polyamine-organocation (APC) superfamily. Amino acid transporter (AAT) (TC 2.A.3.1) family.

It is found in the cell membrane. The chain is L-asparagine permease 1 (ansP1) from Mycobacterium tuberculosis (strain CDC 1551 / Oshkosh).